Here is a 277-residue protein sequence, read N- to C-terminus: Ribosomal RNA small subunit methyltransferase A (277 aa).

Residues asparagine 23, leucine 25, glycine 50, glutamate 75, aspartate 98, and asparagine 121 each contribute to the S-adenosyl-L-methionine site.

It belongs to the class I-like SAM-binding methyltransferase superfamily. rRNA adenine N(6)-methyltransferase family. RsmA subfamily.

It is found in the cytoplasm. The catalysed reaction is adenosine(1518)/adenosine(1519) in 16S rRNA + 4 S-adenosyl-L-methionine = N(6)-dimethyladenosine(1518)/N(6)-dimethyladenosine(1519) in 16S rRNA + 4 S-adenosyl-L-homocysteine + 4 H(+). Its function is as follows. Specifically dimethylates two adjacent adenosines (A1518 and A1519) in the loop of a conserved hairpin near the 3'-end of 16S rRNA in the 30S particle. May play a critical role in biogenesis of 30S subunits. This is Ribosomal RNA small subunit methyltransferase A from Paraburkholderia xenovorans (strain LB400).